Here is a 287-residue protein sequence, read N- to C-terminus: X-box-binding protein 1 (287 aa).

The 57-residue stretch at 61-117 (EEKMDRRKLKNRVAAQNARDKKKERSAKIEDVMRDLVEENRRLRAENERLRRQNKNL) folds into the bZIP domain. Residues 63 to 87 (KMDRRKLKNRVAAQNARDKKKERSA) form a disordered region. Positions 63 to 88 (KMDRRKLKNRVAAQNARDKKKERSAK) are basic motif. The segment covering 78–87 (ARDKKKERSA) has biased composition (basic and acidic residues). The interval 89–117 (IEDVMRDLVEENRRLRAENERLRRQNKNL) is leucine-zipper.

Interacts with SUMO-conjugating enzyme ubc-9; the interaction is direct. Post-translationally, sumoylated. Sumoylation may negatively modulate the transcription of genes involved in the ER-stress-response.

The protein resides in the nucleus. Its function is as follows. Required for transcriptional regulation of the unfolded protein response (UPR) in the endoplasmic reticulum (ER) under stressed conditions, acting downstream of ire-1, and also maintaining ER homeostasis via a negative feedback loop, in parallel with ER kinase pek-1. May also regulate Golgi protein trafficking distal to the ER. Protects the host organism from the detrimental effects of mounting an innate immune response to microbes, such as the Gram-negative bacterium P.aeruginosa, probably by modulating the UPR. Functionally, plays a role in the unconventional cytoplasmic splicing processing of its own mRNA triggered by the endoplasmic reticulum (ER) transmembrane endoribonuclease ire-1: upon ER stress, the emerging xbp-1 polypeptide chain, as part of a mRNA-ribosome-nascent chain (R-RNC) complex, cotranslationally recruits its own unprocessed mRNA through transient docking to the ER membrane and translational pausing, therefore facilitating efficient ire-1-mediated xbp-1 mRNA isoform 2 production. In terms of biological role, functions as a stress-inducible potent transcriptional activator during endoplasmic reticulum (ER) stress by inducing unfolded protein response (UPR) target genes via binding to the UPR element (UPRE). Plays a role in modulation of the UPR, lipid metabolism, proteostasis, and lifespan. In neurons, rescues stress resistance, increases longevity, and, drives expression of lysosomal genes in the intestine and activates the UPR in distal, non-neuronal cell types through a cell-nonautonomous mechanism. In neurons or intestine, plays a role in protection against proteotoxicity, acting via positive modulation of genes involved in lysosomal function, including lipases and the fatty-acid desaturase fat-6. Protection against proteotoxicity in neurons is dependent upon the transcription factor atf-6. The protein is X-box-binding protein 1 of Caenorhabditis elegans.